Consider the following 359-residue polypeptide: 1-deoxy-D-xylulose 5-phosphate reductoisomerase (359 aa).

The NADPH site is built by Thr-7, Gly-8, Ser-9, Ile-10, Gly-31, Lys-32, Asn-33, and Asn-111. Lys-112 contributes to the 1-deoxy-D-xylulose 5-phosphate binding site. Glu-113 serves as a coordination point for NADPH. Asp-131 lines the Mn(2+) pocket. 1-deoxy-D-xylulose 5-phosphate is bound by residues Ser-132, Glu-133, Ser-155, and His-178. A Mn(2+)-binding site is contributed by Glu-133. Gly-184 provides a ligand contact to NADPH. Positions 191, 196, 197, and 200 each coordinate 1-deoxy-D-xylulose 5-phosphate. Glu-200 is a binding site for Mn(2+).

Belongs to the DXR family. Mg(2+) is required as a cofactor. Requires Mn(2+) as cofactor.

It carries out the reaction 2-C-methyl-D-erythritol 4-phosphate + NADP(+) = 1-deoxy-D-xylulose 5-phosphate + NADPH + H(+). Its pathway is isoprenoid biosynthesis; isopentenyl diphosphate biosynthesis via DXP pathway; isopentenyl diphosphate from 1-deoxy-D-xylulose 5-phosphate: step 1/6. In terms of biological role, catalyzes the NADPH-dependent rearrangement and reduction of 1-deoxy-D-xylulose-5-phosphate (DXP) to 2-C-methyl-D-erythritol 4-phosphate (MEP). In Campylobacter lari (strain RM2100 / D67 / ATCC BAA-1060), this protein is 1-deoxy-D-xylulose 5-phosphate reductoisomerase.